The following is a 1097-amino-acid chain: Chitin synthase 2 (1097 aa).

Residues 1-46 (MAGYGHSTAGGFGSGSGSGPPGPQYMLPQYDEGDDPDADATPAGQG) are disordered. Residues 1–748 (MAGYGHSTAG…HVEFLYHLLQ (748 aa)) lie on the Extracellular side of the membrane. The span at 8–19 (TAGGFGSGSGSG) shows a compositional bias: gly residues. Asparagine 55 is a glycosylation site (N-linked (GlcNAc...) asparagine). Disordered stretches follow at residues 148–217 (SGHG…YPRY) and 259–322 (SSQI…RPPQ). The span at 284-296 (STTYSSNTGTSAS) shows a compositional bias: polar residues. A compositionally biased stretch (basic and acidic residues) spans 299–313 (DKFEHYGPIPEEGKH). Residues asparagine 416 and asparagine 424 are each glycosylated (N-linked (GlcNAc...) asparagine). Residues 749–769 (LLFTYFSLANFYLAFYFIAGG) form a helical membrane-spanning segment. At 770–786 (LADPHVDPFNSDGHVAR) the chain is on the cytoplasmic side. A helical membrane pass occupies residues 787–807 (IIFNILRYVCVLLICTQFILS). The Extracellular portion of the chain corresponds to 808–821 (LGNRPQGAKRMYLA). The chain crosses the membrane as a helical span at residues 822–842 (SMIIYAVIMVYTTFATIFIVV). Topologically, residues 843-865 (RQIQPSQKSDDKPDLELGNNVFT) are cytoplasmic. Residues 866–886 (NLIVSVASTLGLYFVMSFLYL) traverse the membrane as a helical segment. Residues 887–894 (DPWHMFTS) are Extracellular-facing. Residues 895–915 (AIQYFVLLPSYICTLQIYAFC) form a helical membrane-spanning segment. Over 916–993 (NTHDVTWGTK…QDYYKSVRTY (78 aa)) the chain is Cytoplasmic. Residues 994–1014 (MVVSWMVANATLAMAVSEAYG) form a helical membrane-spanning segment. Over 1015-1025 (DSEIGDNFYLR) the chain is Extracellular. Residues 1026–1046 (FILWAVAALALFRALGSTTFA) traverse the membrane as a helical segment. Residues 1047–1097 (AINLVSALVEGRVRLRLNMKGFRWIKEKWGDADVKGKFEGLGDRARGLARR) are Cytoplasmic-facing.

The protein belongs to the chitin synthase family.

It localises to the cell membrane. The enzyme catalyses [(1-&gt;4)-N-acetyl-beta-D-glucosaminyl](n) + UDP-N-acetyl-alpha-D-glucosamine = [(1-&gt;4)-N-acetyl-beta-D-glucosaminyl](n+1) + UDP + H(+). Polymerizes chitin, a structural polymer of the cell wall and septum, by transferring the sugar moiety of UDP-GlcNAc to the non-reducing end of the growing chitin polymer. The sequence is that of Chitin synthase 2 (chs-2) from Neurospora crassa (strain ATCC 24698 / 74-OR23-1A / CBS 708.71 / DSM 1257 / FGSC 987).